A 498-amino-acid polypeptide reads, in one-letter code: Protein MGF 505-5R (498 aa).

Belongs to the asfivirus MGF 505 family.

Plays a role in virus cell tropism, and may be required for efficient virus replication in macrophages. The chain is Protein MGF 505-5R from African swine fever virus (strain Badajoz 1971 Vero-adapted) (Ba71V).